A 215-amino-acid chain; its full sequence is Phosphoenolpyruvate guanylyltransferase (215 aa).

Positions 144, 159, and 162 each coordinate phosphoenolpyruvate.

It belongs to the CofC family.

The enzyme catalyses phosphoenolpyruvate + GTP + H(+) = enolpyruvoyl-2-diphospho-5'-guanosine + diphosphate. Its pathway is cofactor biosynthesis; coenzyme F420 biosynthesis. Guanylyltransferase that catalyzes the activation of phosphoenolpyruvate (PEP) as enolpyruvoyl-2-diphospho-5'-guanosine, via the condensation of PEP with GTP. It is involved in the biosynthesis of coenzyme F420, a hydride carrier cofactor. In Geodermatophilus obscurus (strain ATCC 25078 / DSM 43160 / JCM 3152 / CCUG 61914 / KCC A-0152 / KCTC 9177 / NBRC 13315 / NRRL B-3577 / G-20), this protein is Phosphoenolpyruvate guanylyltransferase.